A 31-amino-acid chain; its full sequence is Bacteriocin leucocin-B (31 aa).

It localises to the secreted. Functionally, inhibits a wide spectrum of lactic acid bacteria. The polypeptide is Bacteriocin leucocin-B (Leuconostoc mesenteroides).